The following is a 357-amino-acid chain: MEVSENATTRGSLALVSIILPVHNAEQWLDECLMSVLQQDFEGAMELSVFNDASKDKSRAIIEKWKVKLEDSGISVVIGGHDSPSPRGVGYSKNQAVAQSTGSYLCFLDSDDVMMPQRVRMQYEAAGQHPTSIIGCQVRRDPPDSTERYTRWINHLTSDQLLTQVFTSHGPTVIMPTWFCSRAWFSHVGPFDEGGQGVPEDLLFFYEHLRKGGGVFRVDHSLLLYRYHLYAATHSVLEMTIWTHRVHFLEEQVLPHWKSFTIWNAGKQGRKLYRSLTAASRHKVVAFCDVDENKIRKGFYCYEDSQERPKPKVPILHFQAAQSPFVICVKLDLTGGEFEDNLKSLDLQEGRDFVHFS.

Belongs to the glycosyltransferase 2 family.

Its subcellular location is the cytoplasm. The catalysed reaction is queuosine(34) in tRNA(Tyr) + UDP-alpha-D-galactose = O-5''-beta-D-galactosylqueuosine(34) in tRNA(Tyr) + UDP + H(+). Glycosyltransferase that specifically catalyzes galactosylation of cytoplasmic tRNA(Tyr) modified with queuosine at position 34 (queuosine(34)). Galactosylates the cyclopentene hydroxyl group of queuosine(34) in tRNA(Tyr) to form galactosyl-queuosine(34). Mannosylation of queuosine(34) in tRNA(Tyr) is required to slow-down elongation at cognate codons UAC and suppress stop codon readthrough, thereby regulating protein translation. The sequence is that of Queuosine-tRNA galactosyltransferase from Mus musculus (Mouse).